A 51-amino-acid chain; its full sequence is uncharacterized protein (51 aa).

This is an uncharacterized protein from Rickettsia conorii (strain ATCC VR-613 / Malish 7).